The primary structure comprises 453 residues: Pup--protein ligase (453 aa).

Position 9 (glutamate 9) interacts with Mg(2+). Residue arginine 53 coordinates ATP. Residue tyrosine 55 coordinates Mg(2+). The active-site Proton acceptor is aspartate 57. Glutamate 63 contributes to the Mg(2+) binding site. ATP is bound by residues threonine 66 and tryptophan 420.

It belongs to the Pup ligase/Pup deamidase family. Pup-conjugating enzyme subfamily.

The catalysed reaction is ATP + [prokaryotic ubiquitin-like protein]-L-glutamate + [protein]-L-lysine = ADP + phosphate + N(6)-([prokaryotic ubiquitin-like protein]-gamma-L-glutamyl)-[protein]-L-lysine.. Its pathway is protein degradation; proteasomal Pup-dependent pathway. The protein operates within protein modification; protein pupylation. Catalyzes the covalent attachment of the prokaryotic ubiquitin-like protein modifier Pup to the proteasomal substrate proteins, thereby targeting them for proteasomal degradation. This tagging system is termed pupylation. The ligation reaction involves the side-chain carboxylate of the C-terminal glutamate of Pup and the side-chain amino group of a substrate lysine. The protein is Pup--protein ligase of Streptomyces avermitilis (strain ATCC 31267 / DSM 46492 / JCM 5070 / NBRC 14893 / NCIMB 12804 / NRRL 8165 / MA-4680).